The sequence spans 320 residues: MSIFKRQWFVLISAVSAALSVVLFPLEVFSASPNSGGGGVQQMNILQAIVLGFVQGMTEFLPISSTAHLKVVPVALGWGDPGVAFTAIIQLGSIAAVLWYFWGDLTRIIKGATRAIALKDYADYDLRLSLGIVLGTIPIVFFGLLIKTFIPDYDSSPIRSLGAIAVASIVMSLLLGVGEKLGKRERDFEHLTMQDGLLMGLAQALTLIPGVSRSGSTLTSGLFMGLQRETAARFSFLLGIPAITLAGLVELKDLLAEGIADGAALPLIMGVISAAIFSYLAIAGLLSFLKTQSTWVFIWYRLVFGVAILGAISAGILQNS.

8 consecutive transmembrane segments (helical) span residues 9 to 29 (FVLI…LEVF), 82 to 102 (GVAF…WYFW), 130 to 150 (LGIV…KTFI), 161 to 181 (LGAI…GEKL), 191 to 211 (LTMQ…IPGV), 236 to 256 (FLLG…DLLA), 265 to 285 (LPLI…IAGL), and 296 to 316 (VFIW…SAGI).

Belongs to the UppP family.

The protein localises to the cell inner membrane. It catalyses the reaction di-trans,octa-cis-undecaprenyl diphosphate + H2O = di-trans,octa-cis-undecaprenyl phosphate + phosphate + H(+). Catalyzes the dephosphorylation of undecaprenyl diphosphate (UPP). Confers resistance to bacitracin. The sequence is that of Undecaprenyl-diphosphatase from Nostoc sp. (strain PCC 7120 / SAG 25.82 / UTEX 2576).